Consider the following 429-residue polypeptide: Serine hydroxymethyltransferase (429 aa).

Residues leucine 130 and glycine 134–leucine 136 contribute to the (6S)-5,6,7,8-tetrahydrofolate site. Lysine 239 carries the N6-(pyridoxal phosphate)lysine modification.

Belongs to the SHMT family. Homodimer. Pyridoxal 5'-phosphate serves as cofactor.

The protein localises to the cytoplasm. The catalysed reaction is (6R)-5,10-methylene-5,6,7,8-tetrahydrofolate + glycine + H2O = (6S)-5,6,7,8-tetrahydrofolate + L-serine. Its pathway is one-carbon metabolism; tetrahydrofolate interconversion. It participates in amino-acid biosynthesis; glycine biosynthesis; glycine from L-serine: step 1/1. Functionally, catalyzes the reversible interconversion of serine and glycine with tetrahydrofolate (THF) serving as the one-carbon carrier. This reaction serves as the major source of one-carbon groups required for the biosynthesis of purines, thymidylate, methionine, and other important biomolecules. Also exhibits THF-independent aldolase activity toward beta-hydroxyamino acids, producing glycine and aldehydes, via a retro-aldol mechanism. The chain is Serine hydroxymethyltransferase from Phenylobacterium zucineum (strain HLK1).